Consider the following 192-residue polypeptide: MLLCILCILYFFTTVTQQCAPHSPSPWTKTTHVNNHHHHQTVENFYLDNRTIYHKIIEIEKRIERIEEKENNVLPEPSKPNNPVVNPPVSPIQPKTDPEQSENDCLSCPSLIPILDSCENCVSVKISPPFEYYSCKAVELKCGDGAKKLKISDGFQKNIHENNFKLICKNGSWMMMANHAEHKVETITCLTN.

Residues Asn-71–Gln-100 are disordered. Positions Pro-77–Pro-91 are enriched in pro residues.

This is an uncharacterized protein from Caenorhabditis elegans.